A 449-amino-acid chain; its full sequence is MYHLWIKCLAAWIFLKRCNGVHAMPAKAPMYPNEPFIVLWNAPTTQCPLRYKVDLDLKTFHIVANPNDSLSGSVVTIFYPNHLGVYPHIDERGHFFHGIIPQNESLTKHLNKSKSDINRMIPLKTFHGLGVIDWENWRPQWDRNWGSKNVYRNRSIQFAKELHPELSEDKIKRLAKKEYEKAAKSFMRDTLLLAEEMRPNGYWGYYLYPDCQNYDYKTKGDQYTGKCPDIEMSRNDQLLWLWRDSTALFPNVYLEIILRSSDNALKFVHHRLKESMRIASMAREDYALPVFVYARPFYAYTFEPLTQEDLVTTVGETAAMGAAGIVFWGSMQYASTVDSCQKVKTYMNGPLGRYIVNVTTAAKICSHALCRKNGRCVRKHSDSNAFLHLFPESFRIMVHANATEKKAIVKGKLELKDLIYLRKNFMCQCYQGWKGLYCEEYSIKDIRKI.

The signal sequence occupies residues Met-1–Ala-23. 2 cysteine pairs are disulfide-bonded: Cys-47/Cys-340 and Cys-211/Cys-227. Asn-67, Asn-103, and Asn-111 each carry an N-linked (GlcNAc...) asparagine glycan. Catalysis depends on Glu-135, which acts as the Proton donor. Asn-153 carries N-linked (GlcNAc...) asparagine glycosylation. An N-linked (GlcNAc...) asparagine glycan is attached at Asn-357. 3 disulfide bridges follow: Cys-365–Cys-376, Cys-370–Cys-427, and Cys-429–Cys-438. N-linked (GlcNAc...) asparagine glycosylation occurs at Asn-401. One can recognise an EGF-like domain in the interval Cys-427 to Cys-438.

Belongs to the glycosyl hydrolase 56 family. Monomer. Expressed by the venom gland.

It localises to the secreted. The enzyme catalyses Random hydrolysis of (1-&gt;4)-linkages between N-acetyl-beta-D-glucosamine and D-glucuronate residues in hyaluronate.. In terms of biological role, snake venom endo-hyaluronidase that degrades hyaluronan to smaller oligosaccharide fragments. In venom, it is not toxic by itself, but increases the diffusion of other venom proteins by degrading the extracellular matrix. In addition, it displays antiedematogenic activity. The protein is Hyaluronidase-1 of Bitis arietans (African puff adder).